Here is a 197-residue protein sequence, read N- to C-terminus: dITP/XTP pyrophosphatase (197 aa).

9–14 is a substrate binding site; that stretch reads SNNAGK. D70 acts as the Proton acceptor in catalysis. Mg(2+) is bound at residue D70. Substrate-binding positions include S71, 153–156, K176, and 181–182; these read FGYD and HR.

The protein belongs to the HAM1 NTPase family. Homodimer. Mg(2+) is required as a cofactor.

It carries out the reaction XTP + H2O = XMP + diphosphate + H(+). It catalyses the reaction dITP + H2O = dIMP + diphosphate + H(+). The catalysed reaction is ITP + H2O = IMP + diphosphate + H(+). Functionally, pyrophosphatase that catalyzes the hydrolysis of nucleoside triphosphates to their monophosphate derivatives, with a high preference for the non-canonical purine nucleotides XTP (xanthosine triphosphate), dITP (deoxyinosine triphosphate) and ITP. Seems to function as a house-cleaning enzyme that removes non-canonical purine nucleotides from the nucleotide pool, thus preventing their incorporation into DNA/RNA and avoiding chromosomal lesions. The sequence is that of dITP/XTP pyrophosphatase from Chromobacterium violaceum (strain ATCC 12472 / DSM 30191 / JCM 1249 / CCUG 213 / NBRC 12614 / NCIMB 9131 / NCTC 9757 / MK).